Consider the following 346-residue polypeptide: D-erythrose-4-phosphate dehydrogenase (346 aa).

Position 11 to 12 (11 to 12 (RI)) interacts with NAD(+). Substrate contacts are provided by residues 163–165 (SCT), arginine 209, 222–223 (TK), and arginine 245. The active-site Nucleophile is the cysteine 164. Asparagine 327 lines the NAD(+) pocket.

This sequence belongs to the glyceraldehyde-3-phosphate dehydrogenase family. Epd subfamily. As to quaternary structure, homotetramer.

The protein resides in the cytoplasm. The enzyme catalyses D-erythrose 4-phosphate + NAD(+) + H2O = 4-phospho-D-erythronate + NADH + 2 H(+). It functions in the pathway cofactor biosynthesis; pyridoxine 5'-phosphate biosynthesis; pyridoxine 5'-phosphate from D-erythrose 4-phosphate: step 1/5. Catalyzes the NAD-dependent conversion of D-erythrose 4-phosphate to 4-phosphoerythronate. The protein is D-erythrose-4-phosphate dehydrogenase of Vibrio vulnificus (strain YJ016).